The chain runs to 450 residues: Adenylosuccinate lyase (450 aa).

Residues Arg9–Tyr10, His75–Asp77, and Thr101–Ser102 contribute to the N(6)-(1,2-dicarboxyethyl)-AMP site. The Proton donor/acceptor role is filled by His149. A N(6)-(1,2-dicarboxyethyl)-AMP-binding site is contributed by Gln223. Ser273 (proton donor/acceptor) is an active-site residue. Residues Ser274, Lys279–Asn281, and Ser318–Val322 contribute to the N(6)-(1,2-dicarboxyethyl)-AMP site.

It belongs to the lyase 1 family. Adenylosuccinate lyase subfamily. In terms of assembly, homotetramer. Residues from neighboring subunits contribute catalytic and substrate-binding residues to each active site.

It carries out the reaction N(6)-(1,2-dicarboxyethyl)-AMP = fumarate + AMP. It catalyses the reaction (2S)-2-[5-amino-1-(5-phospho-beta-D-ribosyl)imidazole-4-carboxamido]succinate = 5-amino-1-(5-phospho-beta-D-ribosyl)imidazole-4-carboxamide + fumarate. Its pathway is purine metabolism; AMP biosynthesis via de novo pathway; AMP from IMP: step 2/2. It participates in purine metabolism; IMP biosynthesis via de novo pathway; 5-amino-1-(5-phospho-D-ribosyl)imidazole-4-carboxamide from 5-amino-1-(5-phospho-D-ribosyl)imidazole-4-carboxylate: step 2/2. Functionally, catalyzes two reactions in de novo purine nucleotide biosynthesis. Catalyzes the breakdown of 5-aminoimidazole- (N-succinylocarboxamide) ribotide (SAICAR or 2-[5-amino-1-(5-phospho-beta-D-ribosyl)imidazole-4-carboxamido]succinate) to 5-aminoimidazole-4-carboxamide ribotide (AICAR or 5-amino-1-(5-phospho-beta-D-ribosyl)imidazole-4-carboxamide) and fumarate, and of adenylosuccinate (ADS or N(6)-(1,2-dicarboxyethyl)-AMP) to adenosine monophosphate (AMP) and fumarate. In Pyrococcus horikoshii (strain ATCC 700860 / DSM 12428 / JCM 9974 / NBRC 100139 / OT-3), this protein is Adenylosuccinate lyase (purB).